A 721-amino-acid chain; its full sequence is MLLPVFTLKLRHKISPRMVAIGRYDGTHPCLAAATQAGKVFIHNPHTRSQHFSASRVFQSPLESDVSLLNINQTVSCLGSGVLNPELGYDTLLVGTQTSLLAYDIYNNSDLFYREVSDGANAIVLGTLGDIAPPLAIIGGNCALQGFDHEGNDLFWTVTGDNVHSLALCDFDGDGKTELLVGSEDFDIRVFKEDEIVAEMTETEIVTSLCPMYGSRFGYALSNGTVGVYDKTARYWRIKSKNHAMSIHAFDINSDGVCELITGWSNGKVDARSDRTGEVIFKDNFSSAVAGVVEGDYRMDGHVQLICCSVDGEIRGYLPGTAEMKGNLLDTSVEQDLIRELSQKKQNLLLELRNYEESTKAELSSPLNEADGQKGIIPANTRLHTALSVNMGNDLQDAHAELGISTSNDTIIRAVLIFAEGIFVGESHVVHPSIHNLSSSLRVPITPPKDVPVDLHLKTFVGYRSSTQFHVFELTRQLPRFTMYALTSPDAASEPVSYVNFSVAERTQRMVTWLNQNFLLPEDSNVQNSPFHVCFTSLRNGGQLYIKMKQSGEITVNTDDIDLAGDIIQSIASFFAIEDLQVEADFPVYFEELRKVLVKVDEYHSVHQKLSADMADNSNLIRSLLVRAEDARLMRDMKTMKSRYMELYDLNKDLLNGYKIRCNNHTELLGNLKAVNQAIQRAGRLRVGKPKNQVISACRDAIRSNNINTLFRIMRVGTAPS.

A coiled-coil region spans residues 325–369; sequence KGNLLDTSVEQDLIRELSQKKQNLLLELRNYEESTKAELSSPLNE.

In terms of assembly, part of BBSome complex, that contains BBS1, BBS2, BBS4, BBS5, BBS7, BBS8/TTC8, BBS9 and BBIP10. Interacts (via C-terminus) with BBS7. Interacts (via coiled coil domain) with MKKS. Interacts with CCDC28B. Interacts with DLEC1.

The protein localises to the cell projection. The protein resides in the cilium membrane. It localises to the cytoplasm. Its subcellular location is the cytoskeleton. It is found in the microtubule organizing center. The protein localises to the centrosome. The protein resides in the centriolar satellite. The BBSome complex is thought to function as a coat complex required for sorting of specific membrane proteins to the primary cilia. The BBSome complex is required for ciliogenesis but is dispensable for centriolar satellite function. This ciliogenic function is mediated in part by the Rab8 GDP/GTP exchange factor, which localizes to the basal body and contacts the BBSome. Rab8(GTP) enters the primary cilium and promotes extension of the ciliary membrane. Firstly the BBSome associates with the ciliary membrane and binds to RAB3IP/Rabin8, the guanosyl exchange factor (GEF) for Rab8 and then the Rab8-GTP localizes to the cilium and promotes docking and fusion of carrier vesicles to the base of the ciliary membrane. The BBSome complex, together with the LTZL1, controls SMO ciliary trafficking and contributes to the sonic hedgehog (SHH) pathway regulation. Required for proper BBSome complex assembly and its ciliary localization. The protein is BBSome complex member BBS2 (Bbs2) of Mus musculus (Mouse).